The primary structure comprises 957 residues: MTPLLFPLLLASLLPSSSCNKANKHKPWIEAEYQGIVMENDNTVLLNPPLFALDKDAPLRYAGEICGFRLHGSGVPFEAVILDKATGEGLIRAKEPVDCEAQKEHTFTIQAYDCGEGPDGANTKKSHKATVHVRVNDVNEFAPVFVERLYRAAVTEGKLYDRILRVEAIDGDCSPQYSQICYYEILTPNTPFLIDNDGNIENTEKLQYSGEKLYKFTVTAYDCGKKRAADDAEVEIQVKPTCKPSWQGWNKRIEYAPGAGSLALFPGIRLETCDEPLWNIQATIELQTSHVAKGCDRDNYSERALRKLCGAAPGEVDLLPMPGPNANWTAGLSVHYSQDSSLIYWFNGTQAVQVPLGGAAGLGSGPPDSLSDHFTLSFWMKHGVTPNKGKKEEETIVCNTVQNEDGFSHYSLTVHGCRIAFLYWPLLESARPVKFLWKLEQVCDDEWHHYALNLEFPTVTLYADGISFDPALIHDNGLIHPPRREPALMIGACWAEEKNKEKEKGGDNSTDATAGDPLPIHHYFHGYLAGFSVRSGRLESREVIECLYACREGLDYRDFESLGKGMKVHVNPSQSLLTLEGDDVETFNHALQHVAYMNTLRFATPGVRPLRLTTAVKCFSEESCVSIPEVEGYVVVLQPDAPQILLSGTAHFARPAVDFEGPEGVPLFPDLQITCSISHQVEAKKDESWQGTVTDTRMSDEIVHNLDGCEISLVGDDLDPERESLLLDMASLQQRGLELTNTSAYLTIAGVESITVYEEILRQARYRLRHGAALYARKFRLSCSEMNGRYSSNEFIVEVSVLHSVNRVAHPSHMLSSQQFLHRGHQPPPEMAGHSLASSHRNSMVPSAATLIIVVCVGFLVLMVVLGLVRIHSLHRRVSGASGPPGASSDPKDPDLFWDDSALTIIVNPMESYQSRQVCVAGAAGGQQDDEDSSDSEAADSPSSDERRIIETPPHRY.

A signal peptide spans 1–19 (MTPLLFPLLLASLLPSSSC). The Extracellular segment spans residues 20–848 (NKANKHKPWI…SHRNSMVPSA (829 aa)). Cadherin domains follow at residues 29–145 (IEAE…APVF) and 146–246 (VERL…KPSW). N299, N347, and N508 each carry an N-linked (GlcNAc...) asparagine glycan. Residues 849–869 (ATLIIVVCVGFLVLMVVLGLV) traverse the membrane as a helical segment. The Cytoplasmic segment spans residues 870–957 (RIHSLHRRVS…RIIETPPHRY (88 aa)). Positions 919 to 957 (CVAGAAGGQQDDEDSSDSEAADSPSSDERRIIETPPHRY) are disordered. Over residues 928–938 (QDDEDSSDSEA) the composition is skewed to acidic residues. Basic and acidic residues predominate over residues 944-957 (SDERRIIETPPHRY).

Belongs to the calsyntenin family. In terms of assembly, interacts (via cadherin domains) with both alpha and beta isoforms of neurexins (NRXN1, NRXN2 and NRXN3). Directly interacts with APBA2. Forms a tripartite complex with APBA2 and APP. Interacts with low affinity with KLC1. Interacts with SLC23A2/SVCT2. In terms of processing, proteolytically processed under normal cellular conditions. A primary zeta-cleavage generates a large extracellular (soluble) N-terminal domain (sAlc) and a short C-terminal transmembrane fragment (CTF1). A secondary cleavage catalyzed by gamma-secretase within the transmembrane domain releases the beta-Alc-beta chain in the extracellular milieu and produces an intracellular fragment (AlcICD). This processing is strongly suppressed in the tripartite complex formed with APBA2 and APP, which seems to prevent the association with gamma-secretase.

It is found in the postsynaptic cell membrane. It localises to the endoplasmic reticulum membrane. The protein localises to the golgi apparatus membrane. Its subcellular location is the cell projection. The protein resides in the dendrite. Its function is as follows. Postsynaptic adhesion molecule that binds to presynaptic neurexins to mediate both excitatory and inhibitory synapse formation. Promotes synapse development by acting as a cell adhesion molecule at the postsynaptic membrane, which associates with both neurexin-alpha and neurexin-beta proteins at the presynaptic membrane. Regulates the balance between excitatory and inhibitory synapses by inhibiting formation of excitatory parallel-fiber synapses and promoting formation of inhibitory synapses in the same neuron. May also be involved in ascorbate (vitamin C) uptake via its interaction with SLC23A2/SVCT2. Complex formation with APBA2 and APP, stabilizes APP metabolism and enhances APBA2-mediated suppression of beta-APP40 secretion, due to the retardation of intracellular APP maturation. This chain is Calsyntenin-3 (CLSTN3), found in Bos taurus (Bovine).